The primary structure comprises 392 residues: Pannexin-3 (392 aa).

Over 1-39 the chain is Cytoplasmic; sequence MSLAHTAAEYMLSDALLPDRRGPRLKGLRLELPLDRIVK. The chain crosses the membrane as a helical span at residues 40-60; sequence FVAVGSPLLLMSLAFAQEFSS. The Extracellular portion of the chain corresponds to 61-113; the sequence is GSPISCFSPSNFSIRQAAYVDSSCWDSLLHHKQDGPGQDKMKSLWPHKALPYS. N-linked (GlcNAc...) asparagine glycosylation occurs at Asn71. A helical membrane pass occupies residues 114 to 134; the sequence is LLALALLMYLPVLLWQYAAVP. The Cytoplasmic segment spans residues 135 to 215; it reads ALSSDLLFII…VATYLLRNSL (81 aa). A helical transmembrane segment spans residues 216–236; that stretch reads LLIFTSATYLYLGHFHLDVFF. Topologically, residues 237–267 are extracellular; sequence QEEFSCSIKTGLLSDETHVPNLITCRLTSLS. A helical transmembrane segment spans residues 268–288; that stretch reads IFQIVSLSSVAIYTILVPVII. Topologically, residues 289–392 are cytoplasmic; the sequence is YNLTRLCRWD…LTNSACDEHP (104 aa).

It belongs to the pannexin family. Homoheptameric.

The protein localises to the cell membrane. Its subcellular location is the cell junction. It is found in the gap junction. It localises to the endoplasmic reticulum membrane. The enzyme catalyses Ca(2+)(in) = Ca(2+)(out). It catalyses the reaction ATP(in) = ATP(out). Functionally, regulator of osteoblast differentiation by functionning as a Ca(2+) channel in the endoplasmic reticulum which regulates calmodulin (CaM) pathways. Allows ATP release into the extracellular space and activation or purinergic receptors. The sequence is that of Pannexin-3 from Homo sapiens (Human).